Reading from the N-terminus, the 465-residue chain is Neuromedin-K receptor (465 aa).

Residues 1-84 (MATLPAAETW…TNQFVQPSWR (84 aa)) lie on the Extracellular side of the membrane. N23, N50, and N73 each carry an N-linked (GlcNAc...) asparagine glycan. Residues 85–107 (IALWSLAYGVVVAVAVLGNLIVI) form a helical membrane-spanning segment. Residues 108–117 (WIILAHKRMR) are Cytoplasmic-facing. Residues 118 to 139 (TVTNYFLVNLAFSDASMAAFNT) traverse the membrane as a helical segment. The Extracellular portion of the chain corresponds to 140–159 (LVNFIYALHSEWYFGANYCR). Residues C158 and C233 are joined by a disulfide bond. Residues 160–181 (FQNFFPITAVFASIYSMTAIAV) traverse the membrane as a helical segment. At 182–201 (DRYMAIIDPLKPRLSATATK) the chain is on the cytoplasmic side. Residues 202–222 (IVIGSIWILAFLLAFPQCLYS) traverse the membrane as a helical segment. Residues 223 to 245 (KTKVMPGRTLCFVQWPEGPKQHF) lie on the Extracellular side of the membrane. The chain crosses the membrane as a helical span at residues 246–270 (TYHIIVIILVYCFPLLIMGITYTIV). At 271 to 299 (GITLWGGEIPGDTCDKYHEQLKAKRKVVK) the chain is on the cytoplasmic side. A helical membrane pass occupies residues 300 to 321 (MMIIVVMTFAICWLPYHIYFIL). Residues 322–334 (TAIYQQLNRWKYI) are Extracellular-facing. The chain crosses the membrane as a helical span at residues 335–359 (QQVYLASFWLAMSSTMYNPIIYCCL). Residues 360 to 465 (NKRFRAGFKR…SPYTSVDEYS (106 aa)) lie on the Cytoplasmic side of the membrane. C374 carries S-palmitoyl cysteine lipidation. Residues 415-465 (PNDADTTRSSRKKRATPRDPSFNGCSRRNSKSASATSSFISSPYTSVDEYS) are disordered. Over residues 445-465 (KSASATSSFISSPYTSVDEYS) the composition is skewed to low complexity.

The protein belongs to the G-protein coupled receptor 1 family. In terms of processing, the anchoring of this receptor to the plasma membrane is probably mediated by the palmitoylation of a cysteine residue.

The protein localises to the cell membrane. Its function is as follows. This is a receptor for the tachykinin neuropeptide neuromedin-K (neurokinin B). It is associated with G proteins that activate a phosphatidylinositol-calcium second messenger system. The rank order of affinity of this receptor to tachykinins is: neuromedin-K &gt; substance K &gt; substance P. This Homo sapiens (Human) protein is Neuromedin-K receptor (TACR3).